The primary structure comprises 491 residues: MAQSGGEARPGPKTAVQIRVAIQEAEDVDELEDEEEGAETRGAGDPARYLSPGWGSASEEEPSRGHSGTTASGGENEREDLEQEWKPPDEELIKKLVDQIEFYFSDENLEKDAFLLKHVRRNKLGYVSVKLLTSFKKVKHLTRDWRTTAHALKYSVVLELNEDHRKVRRTTPVPLFPNENLPSKMLLVYDLYLSPKLWALATPQKNGRVQEKVMEHLLKLFGTFGVISSVRILKPGRELPPDIRRISSRYSQVGTQECAIVEFEEVEAAIKAHEFMITESQGKENMKAVLIGMKPPKKKPAKDKNHDEEPTASIHLNKSLNKRVEELQYMGDESSANSSSDPESNPTSPMAGRRHAATNKLSPSGHQNLFLSPNASPCTSPWSSPLAQRKGVSRKSPLAEEGRLNCSTSPEIFRKCMDYSSDSSVTPSGSPWVRRRRQAEMGTQEKSPGTSPLLSRKMQTADGLPVGVLRLPRGPDNTRGFHGHERSRACV.

The disordered stretch occupies residues 1 to 87 (MAQSGGEARP…REDLEQEWKP (87 aa)). Alanine 2 carries the N-acetylalanine modification. Positions 24–37 (EAEDVDELEDEEEG) are enriched in acidic residues. 2 positions are modified to phosphoserine: serine 56 and serine 58. The region spanning 86-177 (KPPDEELIKK…RRTTPVPLFP (92 aa)) is the HTH La-type RNA-binding domain. Residues 184-296 (KMLLVYDLYL…KAVLIGMKPP (113 aa)) form the RRM domain. The Nuclear export signal motif lies at 186–193 (LLVYDLYL). 2 disordered regions span residues 293-403 (MKPP…EEGR) and 423-491 (SSVT…RACV). The short motif at 296-302 (PKKKPAK) is the Nuclear localization signal element. The span at 332–346 (DESSANSSSDPESNP) shows a compositional bias: low complexity. 2 stretches are compositionally biased toward polar residues: residues 359–386 (NKLSPSGHQNLFLSPNASPCTSPWSSPL) and 444–453 (QEKSPGTSPL). Residues 427-485 (PSGSPWVRRRRQAEMGTQEKSPGTSPLLSRKMQTADGLPVGVLRLPRGPDNTRGFHGHE) enclose the SUZ-C domain. Basic and acidic residues predominate over residues 482–491 (HGHERSRACV).

As to quaternary structure, interacts (via the HTH domain) with VIM/vimentin. Interacts (via C-terminus) with non-muscle myosin MYH10. Interacts (via C-terminus) with DHX9. As to expression, expressed in numerous tissues.

Its subcellular location is the cytoplasm. The protein resides in the nucleus. Regulates the coordinated translation of type I collagen alpha-1 and alpha-2 mRNAs, CO1A1 and CO1A2. Stabilizes mRNAs through high-affinity binding of a stem-loop structure in their 5' UTR. This regulation requires VIM and MYH10 filaments, and the helicase DHX9. This is La-related protein 6 (LARP6) from Homo sapiens (Human).